Here is a 1027-residue protein sequence, read N- to C-terminus: Exportin-T (1027 aa).

Belongs to the exportin family.

It localises to the nucleus. It is found in the cytoplasm. In terms of biological role, tRNA nucleus export receptor which facilitates tRNA translocation across the nuclear pore complex. Involved in pre-tRNA splicing, probably by affecting the interaction of pre-tRNA with splicing endonuclease. The polypeptide is Exportin-T (LOS1) (Pyricularia oryzae (strain 70-15 / ATCC MYA-4617 / FGSC 8958) (Rice blast fungus)).